Reading from the N-terminus, the 492-residue chain is Protein nucleotidyltransferase YdiU (492 aa).

Residues G88, G90, R91, K111, D123, G124, R174, and R181 each contribute to the ATP site. The active-site Proton acceptor is the D250. Residues N251 and D260 each coordinate Mg(2+). D260 lines the ATP pocket.

Belongs to the SELO family. Requires Mg(2+) as cofactor. Mn(2+) is required as a cofactor.

The catalysed reaction is L-seryl-[protein] + ATP = 3-O-(5'-adenylyl)-L-seryl-[protein] + diphosphate. The enzyme catalyses L-threonyl-[protein] + ATP = 3-O-(5'-adenylyl)-L-threonyl-[protein] + diphosphate. It catalyses the reaction L-tyrosyl-[protein] + ATP = O-(5'-adenylyl)-L-tyrosyl-[protein] + diphosphate. It carries out the reaction L-histidyl-[protein] + UTP = N(tele)-(5'-uridylyl)-L-histidyl-[protein] + diphosphate. The catalysed reaction is L-seryl-[protein] + UTP = O-(5'-uridylyl)-L-seryl-[protein] + diphosphate. The enzyme catalyses L-tyrosyl-[protein] + UTP = O-(5'-uridylyl)-L-tyrosyl-[protein] + diphosphate. Its function is as follows. Nucleotidyltransferase involved in the post-translational modification of proteins. It can catalyze the addition of adenosine monophosphate (AMP) or uridine monophosphate (UMP) to a protein, resulting in modifications known as AMPylation and UMPylation. This chain is Protein nucleotidyltransferase YdiU, found in Rhodopseudomonas palustris (strain HaA2).